Consider the following 89-residue polypeptide: Putative septation protein SpoVG (89 aa).

This sequence belongs to the SpoVG family.

In terms of biological role, could be involved in septation. The sequence is that of Putative septation protein SpoVG from Heliobacterium modesticaldum (strain ATCC 51547 / Ice1).